The chain runs to 377 residues: Pulmonary surfactant-associated protein B (377 aa).

The signal sequence occupies residues 1–22 (MAKSHLLQWLLLLPTLCCPGAA). Positions 23–191 (ITSASSLECA…PHTQDFSEQQ (169 aa)) are excised as a propeptide. One can recognise a Saposin A-type domain in the interval 24–64 (TSASSLECAQGPQFWCQSLEHAVQCRALGHCLQEVWGHAGA). Saposin B-type domains follow at residues 64–146 (ANDL…PRGQ), 195–272 (PLPF…STED), and 291–366 (QDTE…EAPA). Disulfide bonds link Cys-68–Cys-142, Cys-71–Cys-136, Cys-99–Cys-111, Cys-199–Cys-268, Cys-202–Cys-262, Cys-226–Cys-237, Cys-295–Cys-362, Cys-298–Cys-356, and Cys-321–Cys-331. The propeptide occupies 271–377 (EDAMGPALPA…PLQCFQTPHL (107 aa)). N-linked (GlcNAc...) asparagine glycosylation is present at Asn-307.

Homodimer; disulfide-linked.

The protein localises to the secreted. It localises to the extracellular space. Its subcellular location is the surface film. Its function is as follows. Pulmonary surfactant-associated proteins promote alveolar stability by lowering the surface tension at the air-liquid interface in the peripheral air spaces. SP-B increases the collapse pressure of palmitic acid to nearly 70 millinewtons per meter. This Mus musculus (Mouse) protein is Pulmonary surfactant-associated protein B (Sftpb).